The following is a 316-amino-acid chain: Ribosomal RNA small subunit methyltransferase H (316 aa).

S-adenosyl-L-methionine-binding positions include 35 to 37 (SGH), aspartate 55, phenylalanine 84, aspartate 105, and glutamine 112.

Belongs to the methyltransferase superfamily. RsmH family.

It is found in the cytoplasm. It carries out the reaction cytidine(1402) in 16S rRNA + S-adenosyl-L-methionine = N(4)-methylcytidine(1402) in 16S rRNA + S-adenosyl-L-homocysteine + H(+). Specifically methylates the N4 position of cytidine in position 1402 (C1402) of 16S rRNA. The sequence is that of Ribosomal RNA small subunit methyltransferase H from Streptococcus pyogenes serotype M4 (strain MGAS10750).